A 119-amino-acid chain; its full sequence is MKKRNRLKKNEEFQKVFKKGQSMANRQFVIYQLDQPNQDELRLGLSVSKKIGNAVMRNRIKRLIRQVFLEEGHKLKQEKDYIVIARKPASELTFEETKKSLQHLFRKSAVYQQQPKKSS.

Belongs to the RnpA family. Consists of a catalytic RNA component (M1 or rnpB) and a protein subunit.

The enzyme catalyses Endonucleolytic cleavage of RNA, removing 5'-extranucleotides from tRNA precursor.. RNaseP catalyzes the removal of the 5'-leader sequence from pre-tRNA to produce the mature 5'-terminus. It can also cleave other RNA substrates such as 4.5S RNA. The protein component plays an auxiliary but essential role in vivo by binding to the 5'-leader sequence and broadening the substrate specificity of the ribozyme. The chain is Ribonuclease P protein component from Bacillus pumilus (strain SAFR-032).